Reading from the N-terminus, the 490-residue chain is Aspartyl/glutamyl-tRNA(Asn/Gln) amidotransferase subunit B (490 aa).

The protein belongs to the GatB/GatE family. GatB subfamily. Heterotrimer of A, B and C subunits.

The enzyme catalyses L-glutamyl-tRNA(Gln) + L-glutamine + ATP + H2O = L-glutaminyl-tRNA(Gln) + L-glutamate + ADP + phosphate + H(+). It carries out the reaction L-aspartyl-tRNA(Asn) + L-glutamine + ATP + H2O = L-asparaginyl-tRNA(Asn) + L-glutamate + ADP + phosphate + 2 H(+). Functionally, allows the formation of correctly charged Asn-tRNA(Asn) or Gln-tRNA(Gln) through the transamidation of misacylated Asp-tRNA(Asn) or Glu-tRNA(Gln) in organisms which lack either or both of asparaginyl-tRNA or glutaminyl-tRNA synthetases. The reaction takes place in the presence of glutamine and ATP through an activated phospho-Asp-tRNA(Asn) or phospho-Glu-tRNA(Gln). The polypeptide is Aspartyl/glutamyl-tRNA(Asn/Gln) amidotransferase subunit B (Synechococcus sp. (strain JA-2-3B'a(2-13)) (Cyanobacteria bacterium Yellowstone B-Prime)).